Consider the following 175-residue polypeptide: MLINHLSKIRTVRHFSNIKPVLSKEVSRRVIVAPASHFKTSSPNVKSNIPIHEYKQLPEDSNYIEKHYKELQVFLNEFLIKKLNKTYADFEGDPDELVFQLEKFIELEVTPRYTNHSAPDGCEERFKSIGDRIVVDRYLDFVKDVRLTLLLNGGHSFIFDVMLQAKEVFDKMQKE.

A mitochondrion-targeting transit peptide spans 1–38 (MLINHLSKIRTVRHFSNIKPVLSKEVSRRVIVAPASHF).

It is found in the mitochondrion. Its function is as follows. May be involved in mitochondrial iron or copper homeostatis. In Saccharomyces cerevisiae (strain ATCC 204508 / S288c) (Baker's yeast), this protein is Protein FMP23, mitochondrial (FMP23).